The sequence spans 590 residues: Putative DEAD-box ATP-dependent RNA helicase 51 (590 aa).

Positions 1-81 are disordered; it reads MHPIKLCARS…KQGEGKKGSG (81 aa). A compositionally biased stretch (polar residues) spans 40–51; that stretch reads AACNSEGENNAT. Positions 59–78 are enriched in basic and acidic residues; it reads NKKMKEEKSKRKKKQGEGKK. The Q motif signature appears at 86 to 114; that stretch reads KLFSDLPISDLTANAIRDMNYTHLTEIQA. One can recognise a Helicase ATP-binding domain in the interval 117-293; that stretch reads IPPLMLGSDV…KLTFGSKEER (177 aa). Position 130-137 (130-137) interacts with ATP; it reads AKTGSGKT. The DEAD box motif lies at 240 to 243; sequence DEAD. Residues 329-481 form the Helicase C-terminal domain; it reads VLYAFLKKAL…ELVPKLQPYL (153 aa). Residues 549–590 form a disordered region; it reads LESSASKHRKKRNVNTGRRHGIGPSNPYGRKGSDDRRQFARF. Residues 554–569 show a composition bias toward basic residues; the sequence is SKHRKKRNVNTGRRHG. Residues 579-590 are compositionally biased toward basic and acidic residues; it reads KGSDDRRQFARF.

The protein belongs to the DEAD box helicase family. DDX18/HAS1 subfamily.

The catalysed reaction is ATP + H2O = ADP + phosphate + H(+). The chain is Putative DEAD-box ATP-dependent RNA helicase 51 from Oryza sativa subsp. japonica (Rice).